Here is a 548-residue protein sequence, read N- to C-terminus: MKNVNPTHTLAWKALEDHFAVMKDTEMKTLFSQDPSRFNTFSRTFSDQILVDFSKNRITQETLDKLQALAKECDVAGAIKSMFSGEKINCTEDRAVLHTALRNRSNTPVMVDGKDVMPEVNAVLHKMKVFSERVISGEWKGYTGKAITDVVNIGIGGSDLGPYMVTEALRPYKNHLTMHFVSNVDGTHIAETLKKCDPETTLFLIASKTFTTQETMTNAHSARDWFLSAAKESAFVAKHFVALSTNSAEVEKFGIDTANMFEFWDWVGGRYSLWSAIGLSIVLSIGYDNFEQLLSGAHAMDNHFRTTEAENNIPMILALIGIWYNNFFGTETEAILPYDQYMHRFAAYFQQGNMESNGKYIDRDGNKVSYQTGPIIWGEPGTNGQHAFYQLIHQGTKLIPCDFIAPAISHNPLSDHHAKLMSNFFAQTEALAFGKTREQVDAEFASAGKDPATMGYVAPFKVFEGNRPTNSILLKEITPYSLGALIAMYEHKIFVQGVIFNIFTFDQWGVELGKQLANRILPELKGKESVNSHDSSTNNLINRYKAWR.

The Proton donor role is filled by E355. Residues H386 and K514 contribute to the active site.

It belongs to the GPI family.

It is found in the cytoplasm. The enzyme catalyses alpha-D-glucose 6-phosphate = beta-D-fructose 6-phosphate. It functions in the pathway carbohydrate biosynthesis; gluconeogenesis. It participates in carbohydrate degradation; glycolysis; D-glyceraldehyde 3-phosphate and glycerone phosphate from D-glucose: step 2/4. Functionally, catalyzes the reversible isomerization of glucose-6-phosphate to fructose-6-phosphate. The protein is Glucose-6-phosphate isomerase of Proteus mirabilis (strain HI4320).